Consider the following 470-residue polypeptide: GTPase grn1 (470 aa).

Over residues 1–16 (MVSLKKKSKRRTTRLR) the composition is skewed to basic residues. The segment at 1-56 (MVSLKKKSKRRTTRLRSRIEKKAAESKRKQKRADKKNPQWKSRIPKDPGIPNSFPY) is disordered. Basic and acidic residues predominate over residues 17–27 (SRIEKKAAESK). Positions 153–333 (DKEFKKVVEA…LVDSPGIVFP (181 aa)) constitute a CP-type G domain. GTP contacts are provided by residues 202 to 205 (NKID), 276 to 283 (GYPNVGKS), and 326 to 329 (DSPG). The RNA-binding stretch occupies residues 405–415 (ARKRGRLGRGG).

The protein belongs to the TRAFAC class YlqF/YawG GTPase family.

It is found in the nucleus. The protein localises to the nucleolus. Its function is as follows. Required for optimal growth. Required for normal processing of ribosomal pre-rRNA. Required for nuclear export of ribosomal protein rpl2501. This chain is GTPase grn1, found in Schizosaccharomyces pombe (strain 972 / ATCC 24843) (Fission yeast).